The primary structure comprises 94 residues: Large ribosomal subunit protein uL23 (94 aa).

It belongs to the universal ribosomal protein uL23 family. Part of the 50S ribosomal subunit. Contacts protein L29, and trigger factor when it is bound to the ribosome.

One of the early assembly proteins it binds 23S rRNA. One of the proteins that surrounds the polypeptide exit tunnel on the outside of the ribosome. Forms the main docking site for trigger factor binding to the ribosome. The sequence is that of Large ribosomal subunit protein uL23 from Treponema denticola (strain ATCC 35405 / DSM 14222 / CIP 103919 / JCM 8153 / KCTC 15104).